Reading from the N-terminus, the 94-residue chain is Pyrimidine/purine nucleoside phosphorylase (94 aa).

It belongs to the nucleoside phosphorylase PpnP family.

The catalysed reaction is a purine D-ribonucleoside + phosphate = a purine nucleobase + alpha-D-ribose 1-phosphate. The enzyme catalyses adenosine + phosphate = alpha-D-ribose 1-phosphate + adenine. It catalyses the reaction cytidine + phosphate = cytosine + alpha-D-ribose 1-phosphate. It carries out the reaction guanosine + phosphate = alpha-D-ribose 1-phosphate + guanine. The catalysed reaction is inosine + phosphate = alpha-D-ribose 1-phosphate + hypoxanthine. The enzyme catalyses thymidine + phosphate = 2-deoxy-alpha-D-ribose 1-phosphate + thymine. It catalyses the reaction uridine + phosphate = alpha-D-ribose 1-phosphate + uracil. It carries out the reaction xanthosine + phosphate = alpha-D-ribose 1-phosphate + xanthine. Its function is as follows. Catalyzes the phosphorolysis of diverse nucleosides, yielding D-ribose 1-phosphate and the respective free bases. Can use uridine, adenosine, guanosine, cytidine, thymidine, inosine and xanthosine as substrates. Also catalyzes the reverse reactions. The chain is Pyrimidine/purine nucleoside phosphorylase from Psychromonas ingrahamii (strain DSM 17664 / CCUG 51855 / 37).